The chain runs to 138 residues: Large ribosomal subunit protein uL16 (138 aa).

Belongs to the universal ribosomal protein uL16 family. As to quaternary structure, part of the 50S ribosomal subunit.

Binds 23S rRNA and is also seen to make contacts with the A and possibly P site tRNAs. This Paramagnetospirillum magneticum (strain ATCC 700264 / AMB-1) (Magnetospirillum magneticum) protein is Large ribosomal subunit protein uL16.